The chain runs to 235 residues: MSSPDQDPREAIAQGDDEVIDVRRGMFGAAGTGDTSGYGRLVRTVTLPGSSPRPYGSYFDDVVDTLTESLQSNGIEFHQAIEKVVVYRDELTLHVDRAALPHVAQHLRDDPRLRFEMCLGVSGVHYPHETGRELHAVYPLQSITHNRRVRLEVAVPDEDPHIPSLYRIYPTTDWHERETYDFFGIVFDGHPSLTRIEMPDDWHGHPQRKDYPLGGIPVEYKGAQIPPPDERRAYN.

The protein belongs to the complex I 30 kDa subunit family. In terms of assembly, NDH-1 is composed of 14 different subunits. Subunits NuoB, C, D, E, F, and G constitute the peripheral sector of the complex.

It is found in the cell membrane. It catalyses the reaction a quinone + NADH + 5 H(+)(in) = a quinol + NAD(+) + 4 H(+)(out). Functionally, NDH-1 shuttles electrons from NADH, via FMN and iron-sulfur (Fe-S) centers, to quinones in the respiratory chain. The immediate electron acceptor for the enzyme in this species is believed to be a menaquinone. Couples the redox reaction to proton translocation (for every two electrons transferred, four hydrogen ions are translocated across the cytoplasmic membrane), and thus conserves the redox energy in a proton gradient. In Mycolicibacterium paratuberculosis (strain ATCC BAA-968 / K-10) (Mycobacterium paratuberculosis), this protein is NADH-quinone oxidoreductase subunit C.